A 472-amino-acid polypeptide reads, in one-letter code: Flotillin-like protein 6 (472 aa).

Cysteine 37 is lipidated: S-palmitoyl cysteine. The stretch at 237 to 327 (ENQREAEVAQ…ELYKKQKEAE (91 aa)) forms a coiled coil.

The protein belongs to the band 7/mec-2 family. Flotillin subfamily. In terms of processing, may be palmitoylated. In terms of tissue distribution, very low occasional expression in roots and nodules.

It is found in the cell membrane. The protein resides in the membrane. It localises to the caveola. In terms of biological role, may act as a scaffolding protein within caveolar membranes, functionally participating in formation of caveolae or caveolae-like vesicles. May be involved in nodule formation. In Medicago truncatula (Barrel medic), this protein is Flotillin-like protein 6 (FLOT6).